The chain runs to 219 residues: tRNA (guanine-N(7)-)-methyltransferase (219 aa).

The S-adenosyl-L-methionine site is built by aspartate 47, glutamate 72, asparagine 99, and aspartate 125. The active site involves aspartate 125. Positions 129 and 161 each coordinate substrate.

Belongs to the class I-like SAM-binding methyltransferase superfamily. TrmB family.

It carries out the reaction guanosine(46) in tRNA + S-adenosyl-L-methionine = N(7)-methylguanosine(46) in tRNA + S-adenosyl-L-homocysteine. The protein operates within tRNA modification; N(7)-methylguanine-tRNA biosynthesis. Catalyzes the formation of N(7)-methylguanine at position 46 (m7G46) in tRNA. The protein is tRNA (guanine-N(7)-)-methyltransferase of Nostoc sp. (strain PCC 7120 / SAG 25.82 / UTEX 2576).